Consider the following 341-residue polypeptide: MTKDILILAVETSCDETSVSVIKNGRDILSNTVLSQIESHKRFGGVVPEVASRHHVEGITATINEALGDADVSIEDIDAIAVTEGPGLIGALLIGVNAAKALAFAYDKPLIPVHHIAGHIYANHIEEPLTFPLIALIVSGGHTELVYMKDHLSFEVIGETRDDAVGEAYDKVARTIGLNYPGGPQVDRLAAEGEDTYSFPRVWLDKDSYDFSFSGLKSAVINQLHNQRQKNIPIIEANVATSFQNSVVEVLTFKAIQACKEYGVQRLIVAGGVASNKGLRQSLADQCKVNDIQLTIPSPKLCTDNAAMIGVAGHYLYQQGRFADLALNGHSNIDLEEYSAE.

Fe cation is bound by residues His115 and His119. Substrate is bound by residues Ile137–Gly141, Asp170, Gly183, Asp187, and Asn276. Position 304 (Asp304) interacts with Fe cation.

It belongs to the KAE1 / TsaD family. The cofactor is Fe(2+).

It is found in the cytoplasm. The enzyme catalyses L-threonylcarbamoyladenylate + adenosine(37) in tRNA = N(6)-L-threonylcarbamoyladenosine(37) in tRNA + AMP + H(+). Its function is as follows. Required for the formation of a threonylcarbamoyl group on adenosine at position 37 (t(6)A37) in tRNAs that read codons beginning with adenine. Is involved in the transfer of the threonylcarbamoyl moiety of threonylcarbamoyl-AMP (TC-AMP) to the N6 group of A37, together with TsaE and TsaB. TsaD likely plays a direct catalytic role in this reaction. The polypeptide is tRNA N6-adenosine threonylcarbamoyltransferase (Staphylococcus aureus (strain USA300)).